The following is a 535-amino-acid chain: UDP-N-acetylmuramoyl-L-alanyl-D-glutamate--2,6-diaminopimelate ligase (535 aa).

Leu67 is a UDP-N-acetyl-alpha-D-muramoyl-L-alanyl-D-glutamate binding site. Residue 153–159 participates in ATP binding; the sequence is GTSGKTT. UDP-N-acetyl-alpha-D-muramoyl-L-alanyl-D-glutamate-binding positions include 195–196, Ser222, and Arg230; that span reads TT. N6-carboxylysine is present on Lys262. Residues Arg424, 448-451, Gly502, and Glu506 each bind meso-2,6-diaminopimelate; that span reads DNPR. The short motif at 448–451 is the Meso-diaminopimelate recognition motif element; the sequence is DNPR.

This sequence belongs to the MurCDEF family. MurE subfamily. Mg(2+) is required as a cofactor. In terms of processing, carboxylation is probably crucial for Mg(2+) binding and, consequently, for the gamma-phosphate positioning of ATP.

It is found in the cytoplasm. It catalyses the reaction UDP-N-acetyl-alpha-D-muramoyl-L-alanyl-D-glutamate + meso-2,6-diaminopimelate + ATP = UDP-N-acetyl-alpha-D-muramoyl-L-alanyl-gamma-D-glutamyl-meso-2,6-diaminopimelate + ADP + phosphate + H(+). Its pathway is cell wall biogenesis; peptidoglycan biosynthesis. Functionally, catalyzes the addition of meso-diaminopimelic acid to the nucleotide precursor UDP-N-acetylmuramoyl-L-alanyl-D-glutamate (UMAG) in the biosynthesis of bacterial cell-wall peptidoglycan. This is UDP-N-acetylmuramoyl-L-alanyl-D-glutamate--2,6-diaminopimelate ligase from Mycobacterium bovis (strain ATCC BAA-935 / AF2122/97).